Here is an 871-residue protein sequence, read N- to C-terminus: Speckle targeted PIP5K1A-regulated poly(A) polymerase (871 aa).

The segment at 16–46 (FRCCLCHITTANQPSLDAHLGGRKHRHLVEL) adopts a Matrin-type zinc-finger fold. Residues 56–128 (RSVFVSGFPR…RRLRVRPREQ (73 aa)) enclose the RRM domain. ATP is bound at residue Ser205. The Mg(2+) site is built by Asp216 and Asp218. UTP contacts are provided by Asp216 and Asp218. Residues 252–321 (QALACTPASP…QEDQGDGDQG (70 aa)) form a disordered region. Pro residues predominate over residues 259–269 (ASPPDSQPPAS). ATP is bound at residue Asn392. Positions 392, 414, 432, and 547 each coordinate UTP. Residues 489 to 547 (LSSLLAQFFSCVSCWDLRGSLLSLREGQALSVAGGLPSNLSEGLRLGPMNLQDPFDLSH) enclose the PAP-associated domain. Positions 596-871 (SSPSSILSAT…LPQALRNLLK (276 aa)) are KA1; binds the bulging loops of U6 snRNA but is dispensable for terminal uridylyltransferase activity. The disordered stretch occupies residues 636-684 (GTKRLRSEGGGPGEPPQGGTSKRAKLDGQKKSCEEGPEEQQGCAGEHGE). Over residues 659–669 (AKLDGQKKSCE) the composition is skewed to basic and acidic residues. Ser748 bears the Phosphoserine mark.

It belongs to the DNA polymerase type-B-like family. Associates with the cleavage and polyadenylation specificity factor (CPSF) complex. Interacts with CPSF1 and CPSF3; the interaction is direct. Interacts with PIP5K1A. The cofactor is Mg(2+). Mn(2+) is required as a cofactor. Post-translationally, phosphorylated by CK1 in the proline-rich (Pro-rich) region.

It is found in the nucleus. Its subcellular location is the nucleolus. It localises to the nucleus speckle. It catalyses the reaction RNA(n) + UTP = RNA(n)-3'-uridine ribonucleotide + diphosphate. It carries out the reaction RNA(n) + ATP = RNA(n)-3'-adenine ribonucleotide + diphosphate. With respect to regulation, adenylyltransferase activity is specifically phosphatidylinositol 4,5-bisphosphate (PtdIns(4,5)P2). Functionally, poly(A) polymerase that creates the 3'-poly(A) tail of specific pre-mRNAs. Localizes to nuclear speckles together with PIP5K1A and mediates polyadenylation of a select set of mRNAs, such as HMOX1. In addition to polyadenylation, it is also required for the 3'-end cleavage of pre-mRNAs: binds to the 3'UTR of targeted pre-mRNAs and promotes the recruitment and assembly of the CPSF complex on the 3'UTR of pre-mRNAs. In addition to adenylyltransferase activity, also has uridylyltransferase activity. However, the ATP ratio is higher than UTP in cells, suggesting that it functions primarily as a poly(A) polymerase. Acts as a specific terminal uridylyltransferase for U6 snRNA in vitro: responsible for a controlled elongation reaction that results in the restoration of the four 3'-terminal UMP-residues found in newly transcribed U6 snRNA. Not involved in replication-dependent histone mRNA degradation. In Bos taurus (Bovine), this protein is Speckle targeted PIP5K1A-regulated poly(A) polymerase (TUT1).